The following is a 179-amino-acid chain: Large ribosomal subunit protein uL6 (179 aa).

It belongs to the universal ribosomal protein uL6 family. In terms of assembly, part of the 50S ribosomal subunit.

Its function is as follows. This protein binds to the 23S rRNA, and is important in its secondary structure. It is located near the subunit interface in the base of the L7/L12 stalk, and near the tRNA binding site of the peptidyltransferase center. The protein is Large ribosomal subunit protein uL6 of Prochlorococcus marinus (strain MIT 9211).